We begin with the raw amino-acid sequence, 493 residues long: Proline--tRNA ligase (493 aa).

Belongs to the class-II aminoacyl-tRNA synthetase family. ProS type 3 subfamily. As to quaternary structure, homodimer.

Its subcellular location is the cytoplasm. It catalyses the reaction tRNA(Pro) + L-proline + ATP = L-prolyl-tRNA(Pro) + AMP + diphosphate. In terms of biological role, catalyzes the attachment of proline to tRNA(Pro) in a two-step reaction: proline is first activated by ATP to form Pro-AMP and then transferred to the acceptor end of tRNA(Pro). This Azobacteroides pseudotrichonymphae genomovar. CFP2 protein is Proline--tRNA ligase.